We begin with the raw amino-acid sequence, 326 residues long: Glutaredoxin 3 (326 aa).

A Thioredoxin domain is found at 1-108 (MANFTDAASL…LTNKVQRLGS (108 aa)). 2 consecutive Glutaredoxin domains span residues 125-227 (NQRL…VSLE) and 227-326 (ENRL…KGEN). [2Fe-2S] cluster is bound by residues C150 and C252.

Homodimer; the homodimer is independent of 2Fe-2S clusters. Heterotrimer; forms a heterotrimeric complex composed by two bola2 molecules and one glrx3 molecule; linked by [2Fe-2S] clusters.

The protein resides in the cytoplasm. The protein localises to the cytosol. Together with bola2, acts as a cytosolic iron-sulfur (Fe-S) cluster assembly factor that facilitates [2Fe-2S] cluster insertion into a subset of cytosolic proteins. Required for hemoglobin maturation. Does not possess any thyoredoxin activity since it lacks the conserved motif that is essential for catalytic activity. This chain is Glutaredoxin 3 (glrx3), found in Danio rerio (Zebrafish).